The sequence spans 549 residues: Cation/acetate symporter ActP (549 aa).

13 helical membrane-spanning segments follow: residues 33–53 (WQAI…TYWA), 77–97 (LAIA…ALVF), 103–123 (GLIY…LIAE), 148–168 (ILSA…QMVG), 183–203 (IAVV…GMLA), 206–226 (WVQI…AFMV), 262–282 (ISAL…PHIL), 303–323 (GFMG…IMLV), 355–375 (LFLG…VAGL), 404–424 (VSKI…VLFE), 428–448 (IAFM…PIIL), 464–484 (GGWL…TIWV), and 493–513 (IFPY…GIWF).

The protein belongs to the sodium:solute symporter (SSF) (TC 2.A.21) family.

The protein resides in the cell inner membrane. In terms of biological role, transports acetate. This Escherichia fergusonii (strain ATCC 35469 / DSM 13698 / CCUG 18766 / IAM 14443 / JCM 21226 / LMG 7866 / NBRC 102419 / NCTC 12128 / CDC 0568-73) protein is Cation/acetate symporter ActP.